Consider the following 159-residue polypeptide: Cytochrome c-type biogenesis protein CcmE (159 aa).

Residues 1–8 (MNLRRKNR) are Cytoplasmic-facing. The chain crosses the membrane as a helical; Signal-anchor for type II membrane protein span at residues 9-29 (LWVVCAVLAGLGLTTALVLYA). Residues 30 to 159 (LRANIDLFYT…PQRADKDTSS (130 aa)) lie on the Periplasmic side of the membrane. Positions 129-159 (KHDENYTPPEVEKAMQENHRRPQRADKDTSS) are disordered. 2 residues coordinate heme: H130 and Y134.

The protein belongs to the CcmE/CycJ family.

It is found in the cell inner membrane. Its function is as follows. Heme chaperone required for the biogenesis of c-type cytochromes. Transiently binds heme delivered by CcmC and transfers the heme to apo-cytochromes in a process facilitated by CcmF and CcmH. The polypeptide is Cytochrome c-type biogenesis protein CcmE (Salmonella typhimurium (strain LT2 / SGSC1412 / ATCC 700720)).